The chain runs to 206 residues: Small ribosomal subunit protein uS4 (206 aa).

The S4 RNA-binding domain maps to 96-156 (TRLDNVVYRM…EKSQKQARIK (61 aa)).

This sequence belongs to the universal ribosomal protein uS4 family. In terms of assembly, part of the 30S ribosomal subunit. Contacts protein S5. The interaction surface between S4 and S5 is involved in control of translational fidelity.

One of the primary rRNA binding proteins, it binds directly to 16S rRNA where it nucleates assembly of the body of the 30S subunit. Functionally, with S5 and S12 plays an important role in translational accuracy. This is Small ribosomal subunit protein uS4 from Shewanella loihica (strain ATCC BAA-1088 / PV-4).